Consider the following 142-residue polypeptide: UPF0102 protein Bcep18194_A3391 (142 aa).

The interval 1–27 (MCHAAPARPGDGRGLPRAGDNFSGAAR) is disordered.

This sequence belongs to the UPF0102 family.

In Burkholderia lata (strain ATCC 17760 / DSM 23089 / LMG 22485 / NCIMB 9086 / R18194 / 383), this protein is UPF0102 protein Bcep18194_A3391.